Reading from the N-terminus, the 274-residue chain is NAD(P)H dehydrogenase [quinone] 1 (274 aa).

FAD-binding positions include histidine 12, 18–19, and glutamine 67; that span reads FN. The residue at position 82 (serine 82) is a Phosphoserine. Position 104–107 (104–107) interacts with FAD; sequence LQWF. Residue 126 to 128 coordinates substrate; sequence AYT. FAD-binding positions include 148–151, tyrosine 156, and arginine 201; that span reads TTGG. The tract at residues 225 to 274 is important for apoenzyme conformational stability; sequence PSSLFDLNFQAGFLMKKEVQDEEKNKKFGLSVGHHLGKSIPTDNQIKARK. Residues lysine 250 and lysine 251 each participate in a glycyl lysine isopeptide (Lys-Gly) (interchain with G-Cter in SUMO2) cross-link.

Belongs to the NAD(P)H dehydrogenase (quinone) family. Homodimer. Interacts with PDLIM4 isoform 2; this interaction stabilizes PDLIM4 isoform 2 in response to oxidative stress and protects it from ubiquitin-independent degradation by the core 20S proteasome. Interacts with TP73 (via SAM domain); this interaction is NADH-dependent, stabilizes TP73 in response to oxidative stress and protects it from ubiquitin-independent degradation by the 20S proteasome. Interacts with TP53; this interaction is NADH-dependent, stabilizes TP53 in response to oxidative stress and protects it from ubiquitin-independent degradation by the 20S proteasome. Requires FAD as cofactor.

It localises to the cytoplasm. The protein resides in the cytosol. It carries out the reaction a quinone + NADH + H(+) = a quinol + NAD(+). It catalyses the reaction a quinone + NADPH + H(+) = a quinol + NADP(+). The enzyme catalyses ubiquinone-10 + NADH + H(+) = ubiquinol-10 + NAD(+). The catalysed reaction is menadione + NADH + H(+) = menadiol + NAD(+). Its activity is regulated as follows. Inhibited by dicoumarol. Its function is as follows. Flavin-containing quinone reductase that catalyzes two-electron reduction of quinones to hydroquinones using either NADH or NADPH as electron donors. In a ping-pong kinetic mechanism, the electrons are sequentially transferred from NAD(P)H to flavin cofactor and then from reduced flavin to the quinone, bypassing the formation of semiquinone and reactive oxygen species. Regulates cellular redox state primarily through quinone detoxification. Reduces components of plasma membrane redox system such as coenzyme Q and vitamin quinones, producing antioxidant hydroquinone forms. In the process may function as superoxide scavenger to prevent hydroquinone oxidation and facilitate excretion. Alternatively, can activate quinones and their derivatives by generating redox reactive hydroquinones with DNA cross-linking antitumor potential. Acts as a gatekeeper of the core 20S proteasome known to degrade proteins with unstructured regions. Upon oxidative stress, interacts with tumor suppressors TP53 and TP73 in a NADH-dependent way and inhibits their ubiquitin-independent degradation by the 20S proteasome. This is NAD(P)H dehydrogenase [quinone] 1 from Homo sapiens (Human).